The sequence spans 631 residues: Arginine--tRNA ligase (631 aa).

Positions 132 to 142 (PNIAKPLHVGH) match the 'HIGH' region motif.

Belongs to the class-I aminoacyl-tRNA synthetase family.

It is found in the cytoplasm. The enzyme catalyses tRNA(Arg) + L-arginine + ATP = L-arginyl-tRNA(Arg) + AMP + diphosphate. This chain is Arginine--tRNA ligase, found in Halobacterium salinarum (strain ATCC 700922 / JCM 11081 / NRC-1) (Halobacterium halobium).